The primary structure comprises 1392 residues: DNA-directed RNA polymerase subunit beta'' (1392 aa).

Zn(2+) contacts are provided by cysteine 224, cysteine 295, cysteine 302, and cysteine 305.

This sequence belongs to the RNA polymerase beta' chain family. RpoC2 subfamily. In terms of assembly, in plastids the minimal PEP RNA polymerase catalytic core is composed of four subunits: alpha, beta, beta', and beta''. When a (nuclear-encoded) sigma factor is associated with the core the holoenzyme is formed, which can initiate transcription. Requires Zn(2+) as cofactor.

It is found in the plastid. Its subcellular location is the chloroplast. The enzyme catalyses RNA(n) + a ribonucleoside 5'-triphosphate = RNA(n+1) + diphosphate. Its function is as follows. DNA-dependent RNA polymerase catalyzes the transcription of DNA into RNA using the four ribonucleoside triphosphates as substrates. The protein is DNA-directed RNA polymerase subunit beta'' of Solanum tuberosum (Potato).